Consider the following 106-residue polypeptide: Large ribosomal subunit protein uL24 (106 aa).

Residues 84–97 (EKIGRELGAKEKAR) are compositionally biased toward basic and acidic residues. Residues 84–106 (EKIGRELGAKEKARLQKRKAAAK) are disordered.

This sequence belongs to the universal ribosomal protein uL24 family. Part of the 50S ribosomal subunit.

Functionally, one of two assembly initiator proteins, it binds directly to the 5'-end of the 23S rRNA, where it nucleates assembly of the 50S subunit. One of the proteins that surrounds the polypeptide exit tunnel on the outside of the subunit. The polypeptide is Large ribosomal subunit protein uL24 (Anaeromyxobacter sp. (strain K)).